Reading from the N-terminus, the 78-residue chain is Calcium/calmodulin-dependent protein kinase II inhibitor 1 (78 aa).

The tract at residues 41–68 (NKRPPKLGQIGRSKRVVIEDDRIDDVLK) is CAMK2 inhibitory domain.

Belongs to the CAMK2N family. As to quaternary structure, interacts with CAMK2B; the presence of Ca(2+)/calmodulin increases the interaction but is not essential. Interacts with CAMK2A; this interaction requires CAMK2A activation by Ca(2+).

The protein resides in the synapse. It localises to the cell projection. Its subcellular location is the dendrite. The protein localises to the postsynaptic density. In terms of biological role, potent and specific inhibitor of CaM-kinase II (CAMK2). Plays a role in the maintenance of long-term retrieval-induced memory in response to contextual fear. Modulates blood pressure and vascular reactivity via regulation of CAMK2 activity in addition to regulation of left ventricular mass. Mediates the NLRP3 inflammasome in cardiomyocytes via acting as an inhibitor of the MAPK14/p38 and MAPK8/JNK pathways, thereby regulating ventricular remodeling and cardiac rhythm post-myocardial infarction. Negatively effects insulin sensitivity and promotes lipid formation in adipose tissues independent of CAMK2 signaling. This chain is Calcium/calmodulin-dependent protein kinase II inhibitor 1 (CAMK2N1), found in Bos taurus (Bovine).